An 841-amino-acid polypeptide reads, in one-letter code: Rhomboid-like protease 5 (841 aa).

A compositionally biased stretch (low complexity) spans methionine 1 to leucine 10. The tract at residues methionine 1 to serine 289 is disordered. A compositionally biased stretch (basic and acidic residues) spans glycine 11–glutamate 51. Low complexity predominate over residues leucine 95 to serine 132. Basic and acidic residues-rich tracts occupy residues leucine 154–glutamate 163, arginine 209–valine 230, and serine 243–aspartate 275. Transmembrane regions (helical) follow at residues phenylalanine 323–leucine 343, methionine 464–valine 484, tryptophan 492–valine 512, valine 526–isoleucine 546, phenylalanine 571–isoleucine 590, and phenylalanine 673–proline 693. The active-site Nucleophile is serine 531. Histidine 585 is an active-site residue.

It belongs to the peptidase S54 family.

The protein resides in the membrane. It catalyses the reaction Cleaves type-1 transmembrane domains using a catalytic dyad composed of serine and histidine that are contributed by different transmembrane domains.. Its function is as follows. Serine protease involved in intramembrane proteolysis. Cleaves microneme adhesins, such as MIC2. This step is essential for efficient invasion of host cells. Catalyzes intramembrane proteolysis of AMA1. In Toxoplasma gondii, this protein is Rhomboid-like protease 5 (ROM5).